Reading from the N-terminus, the 520-residue chain is Mu-like prophage FluMu protein gp29 (520 aa).

It to phage Mu protein gp29.

This chain is Mu-like prophage FluMu protein gp29, found in Haemophilus influenzae (strain ATCC 51907 / DSM 11121 / KW20 / Rd).